Reading from the N-terminus, the 466-residue chain is Amino acid permease 4 (466 aa).

At 1 to 22 the chain is on the cytoplasmic side; that stretch reads MDVPRPAFKCFDDDGRLKRSGT. Transmembrane regions (helical) follow at residues 23–43 and 44–64; these read VWTASAHIITAVIGSGVLSLA and WAIGQLGWIAGPTVMLLFSFV. Residues 65-111 are Cytoplasmic-facing; it reads TYYSSTLLSDCYRTGDPVSGKRNYTYMDAVRSILGGFRFKICGLIQY. Residues 112 to 132 traverse the membrane as a helical segment; sequence LNLFGITVGYTIAASISMMAI. At 133–177 the chain is on the extracellular side; the sequence is KRSNCFHESGGKNPCHMSSNPYMIMFGVTEILLSQIKDFDQIWWL. The helical transmembrane segment at 178–198 threads the bilayer; it reads SIVAAIMSFTYSAIGLALGII. Residues 199 to 226 are Cytoplasmic-facing; the sequence is QVAANGVVKGSLTGISIGAVTQTQKIWR. A helical membrane pass occupies residues 227–247; that stretch reads TFQALGDIAFAYSYSVVLIEI. Topologically, residues 248–266 are extracellular; sequence QDTVRSPPAESKTMKIATR. A helical membrane pass occupies residues 267–287; the sequence is ISIAVTTTFYMLCGCMGYAAF. The Cytoplasmic portion of the chain corresponds to 288 to 290; it reads GDK. A helical membrane pass occupies residues 291-311; it reads APGNLLTGFGFYNPFWLLDVA. The Extracellular portion of the chain corresponds to 312–313; that stretch reads NA. A helical membrane pass occupies residues 314–334; it reads AIVIHLVGAYQVFAQPIFAFI. At 335–369 the chain is on the cytoplasmic side; sequence EKQAAARFPDSDLVTKEYEIRIPGFRSPYKVNVFR. Residues 370–390 form a helical membrane-spanning segment; sequence AVYRSGFVVLTTVISMLMPFF. Residues 391 to 392 are Extracellular-facing; the sequence is ND. A helical transmembrane segment spans residues 393-413; it reads VVGILGALGFWPLTVYFPVEM. At 414-435 the chain is on the cytoplasmic side; sequence YIRQRKVERWSMKWVCLQMLSC. A helical membrane pass occupies residues 436-456; the sequence is GCLMITLVAGVGSIAGVMLDL. The Extracellular portion of the chain corresponds to 457-466; sequence KVYKPFKTTY.

Belongs to the amino acid/polyamine transporter 2 family. Amino acid/auxin permease (AAAP) (TC 2.A.18.2) subfamily. In terms of tissue distribution, expressed in leaves, stems and flowers.

It localises to the cell membrane. With respect to regulation, inhibited by 2,4-dinitrophenol. Its function is as follows. Amino acid-proton symporter. Stereospecific transporter with a broad specificity for neutral amino acids, favoring small amino acids such as alanine, asparagine and glutamine. Also accepts large aromatic residues such as in phenlalanine or tyrosine. In Arabidopsis thaliana (Mouse-ear cress), this protein is Amino acid permease 4 (AAP4).